A 3169-amino-acid chain; its full sequence is FRAS1-related extracellular matrix protein 2 (3169 aa).

Positions 1-24 (MHSAGTPGLSSRRTGNSTSFQPGP) are disordered. The signal sequence occupies residues 1–46 (MHSAGTPGLSSRRTGNSTSFQPGPPPPPRLLLLLLLLLSLVSRVPA). Over residues 8–21 (GLSSRRTGNSTSFQ) the composition is skewed to polar residues. The Extracellular portion of the chain corresponds to 47-3113 (QPAAFGRALL…SPSSAVSLVT (3067 aa)). CSPG repeat units follow at residues 319 to 413 (KPSF…LELE), 438 to 537 (APVV…LRMV), 560 to 675 (PPVL…FRVQ), 700 to 807 (PPEL…FQVE), 828 to 919 (QPPE…LEVS), 945 to 1037 (HPTG…LSLS), 1066 to 1168 (APEI…FRCS), 1189 to 1282 (EQPE…IKLT), 1303 to 1399 (TPRM…FDVT), 1420 to 1512 (VFPD…FQVT), 1532 to 1621 (KKPV…FTVT), and 1655 to 1752 (VPQI…FAVE). The N-linked (GlcNAc...) asparagine glycan is linked to asparagine 358. N-linked (GlcNAc...) asparagine glycosylation is found at asparagine 1244 and asparagine 1369. 2 N-linked (GlcNAc...) asparagine glycosylation sites follow: asparagine 1584 and asparagine 1741. Calx-beta domains follow at residues 1759–1858 (LTYQ…VVLS), 1871–1982 (ATVE…VLLS), 1997–2103 (QVTI…LVLR), 2118–2220 (VSIN…LVLG), and 2238–2342 (TLIR…VHLK). The tract at residues 3036 to 3057 (SLVSQGKPQSTTKSRKKREIRS) is disordered. Residues 3037–3047 (LVSQGKPQSTT) show a composition bias toward polar residues. Residues 3114-3134 (VVGGTTVGLLTICLTVIAVLM) traverse the membrane as a helical segment. Residues 3135 to 3169 (CRGKESFRGKDAPKGSSSSEPMVPPQSHHNDSSEV) lie on the Cytoplasmic side of the membrane. The tract at residues 3141-3169 (FRGKDAPKGSSSSEPMVPPQSHHNDSSEV) is disordered.

Belongs to the FRAS1 family. As to quaternary structure, interacts with FREM1.

The protein localises to the cell membrane. Extracellular matrix protein required for maintenance of the integrity of the skin epithelium and for maintenance of renal epithelia. Required for epidermal adhesion. Involved in the development of eyelids and the anterior segment of the eyeballs. The polypeptide is FRAS1-related extracellular matrix protein 2 (FREM2) (Homo sapiens (Human)).